The sequence spans 342 residues: tRNA-specific 2-thiouridylase MnmA (342 aa).

ATP contacts are provided by residues 6–13 (LLSGGVDS) and L32. The active-site Nucleophile is the C92. C92 and C191 form a disulfide bridge. G116 contributes to the ATP binding site. Residues 138-140 (KDQ) are interaction with tRNA. C191 functions as the Cysteine persulfide intermediate in the catalytic mechanism. Residues 293–294 (RY) form an interaction with tRNA region.

The protein belongs to the MnmA/TRMU family.

It is found in the cytoplasm. The catalysed reaction is S-sulfanyl-L-cysteinyl-[protein] + uridine(34) in tRNA + AH2 + ATP = 2-thiouridine(34) in tRNA + L-cysteinyl-[protein] + A + AMP + diphosphate + H(+). Catalyzes the 2-thiolation of uridine at the wobble position (U34) of tRNA, leading to the formation of s(2)U34. The sequence is that of tRNA-specific 2-thiouridylase MnmA from Helicobacter pylori (strain HPAG1).